The chain runs to 1111 residues: Nuclear migration and anchoring protein unc-84 (1111 aa).

Over 1–509 (MAPATEADNN…LTDKKSSKFS (509 aa)) the chain is Nuclear. 2 required for nuclear envelope localization regions span residues 118 to 244 (YILR…SQTL) and 503 to 507 (KKSSK). Residues 232-253 (ERASRMTTRSQTLERSRKFDGL) form a disordered region. Over residues 243–252 (TLERSRKFDG) the composition is skewed to basic and acidic residues. Residues 510–530 (WCQILGLLLALLFAIFLLGFL) form a helical membrane-spanning segment. The Perinuclear space portion of the chain corresponds to 531–1111 (TSDNTAIRVK…LRVHGKVVQV (581 aa)). The segment at 912–1111 (QYDKNHLEAI…LRVHGKVVQV (200 aa)) is interaction with zyg-12. Positions 945-1109 (GGAVVSTRCS…YRLRVHGKVV (165 aa)) constitute an SUN domain.

In terms of assembly, component of the unc-83-unc-84 LINC complex which contains at least unc-83 and unc-84. Within the unc-83-unc-84 LINC complex interacts (via C-terminus) with unc-83; the interaction is probably required to recruit unc-83 to the nuclear membrane. Most likely interacts with anc-1; the interaction is probably required to recruit anc-1 to the nuclear envelope. Interacts (via C-terminus) with zyg-12 (via C-terminus); the interaction is direct. May interact with lmn-1; this interaction may be required to complete the connection between the nuclear lamina and the cytoskeleton. As to expression, expressed in all somatic cells. Not expressed in germ cells in the mitotic and transition zones of the gonad. One study shows expression at the beginning of the late pachytene stage in the proximal gonad, but there is no expression in the male germline, suggesting expression is specific to oogenesis in hermaphrodites.

It localises to the nucleus inner membrane. Its subcellular location is the cytoplasm. The protein localises to the cytoskeleton. Involved in nuclear migration and anchoring in hypodermal precursor cells. Most likely recruits anc-1 to the nuclear envelope where anc-1 functions to tether the nucleus to the actin cytoskeleton. Component of the unc-83-unc-84 LINC (LInker of Nucleoskeleton and Cytoskeleton) complex where it recruits and interacts with unc-83 to form a bridge connecting the nuclear envelope to the cytoskeleton which allows for nuclear transport along microtubules. Its role in nuclear migration may be in association with lamin, lmn-1. Regulates nuclear migrations in one-cell embryos, controlling the posterior migration of the male pronucleus following fertilization. Not required for centrosome attachment to the nucleus. Plays a role in the maintenance of the nuclear envelope architecture in body wall muscle cells. May be involved in DNA damage repair through an association with zyg-12. Potentially has roles in homologous recombination, double strand break repair and meiotic recombination. Specifically, may in part inhibit non-homologous end joining repair, most likely through recruiting fan-1 to the nucleoplasm, to facilitate the repair of DNA cross-links. In Caenorhabditis elegans, this protein is Nuclear migration and anchoring protein unc-84.